Consider the following 309-residue polypeptide: Thermolabile glutaminase (309 aa).

Positions 64, 114, 160, 167, 191, 243, and 261 each coordinate substrate.

This sequence belongs to the glutaminase family. As to quaternary structure, homotetramer.

The enzyme catalyses L-glutamine + H2O = L-glutamate + NH4(+). This is Thermolabile glutaminase (glsA) from Rhizobium etli (strain ATCC 51251 / DSM 11541 / JCM 21823 / NBRC 15573 / CFN 42).